The chain runs to 153 residues: Jacalin-related lectin Calsepa (153 aa).

At alanine 2 the chain carries N-acetylalanine. In terms of domain architecture, Jacalin-type lectin spans 6–152 (DTISGPWGNN…VDAIGTYNRH (147 aa)). N-glycan binding stretches follow at residues 17-18 (GN), 95-96 (DN), and 140-144 (GYYVD).

The protein belongs to the jacalin lectin family. In terms of assembly, homodimer. In terms of processing, not glycosylated. Rhizome (at protein level). Detected in the cortex and the pith of rhizome. Not detected in vascular tissues, pericycle, endodermis or rhizodermis.

It is found in the cytoplasm. Hemagglutinating activity is most inhibited by methyl alpha-mannopyranoside. This activity is inhibited to a less extent (about a third of the inhibition of that of methyl alpha-mannopyranoside) by methyl alpha-glucoside, other alpha-glucosides, such as maltose, isomaltose, panose or palatinose, and alpha-glucosides modified at the second position, such as methyl 2-deoxy-alpha-arabinoglucopyranoside or methyl 2-acetamido-2-deoxy alpha-glucopyranoside. Mildly inhibited by free monosaccharides, with glucose presenting at least 20-fold less inhibitory effect on hemagglutinating activity than mannose. Glycoproteins are somewhat inhibitory, the best being asialothyroglobulin and ovomucoid. Not inhibited by isomaltitol, sucrose or trehalose. Its function is as follows. Mannose-binding lectin. Preferentially binds mannose at concentrations ranging between 5 and 25 mM, but also binds glucose. Has a marked preference for methylated sugar derivatives, such as alpha-MeMan and alpha-MeGlc, at concentration down to 5 mM. Binds to N-glycans, but not to glycolipid-type or other type of glycans. Binds N-linked high-mannose-type glycans. Has a preference for smaller (Man(2)-Man(6)) high-mannose-type glycans to larger (Man(7)-Man(9)) ones. Recognizes both alpha1-6 extended and alpha1-3 extended monoantennary glycans. The addition of alpha1-2Man to the Man-alpha1-3Man-beta branch results in a significant loss of affinity, but beta1-2GlcNAc has some affinity. Has less affinity for biantennary glycans. However, affinity is significant for the biantennary complex-type N-glycans with bisecting GlcNAc. No affinity is observed for tri- and tetra-antennary glycans. Binds bisected glycans of the mouse brain. Selectively binds to bisecting N-glycans which are in back-fold conformation, and does not favor a glycan with an extend conformation. Has hemagglutinating activity against rabbit erythrocytes at 0.3 ug/ml and against trypsin-treated human erythrocytes at 5 ug/ml. Has mitogenic activity in murine cells. This chain is Jacalin-related lectin Calsepa, found in Calystegia sepium (Hedge bindweed).